Here is a 368-residue protein sequence, read N- to C-terminus: (3S,6E)-nerolidol synthase (368 aa).

Mg(2+)-binding residues include D91, N228, and S232. The DDXXE motif signature appears at 91–95; sequence DDLLE.

This sequence belongs to the terpene synthase family. Mg(2+) is required as a cofactor. Mn(2+) serves as cofactor.

The catalysed reaction is (2E,6E)-farnesyl diphosphate + H2O = (3S,6E)-nerolidol + diphosphate. The enzyme catalyses (2E)-geranyl diphosphate + H2O = (S)-linalool + diphosphate. The protein operates within secondary metabolite biosynthesis; terpenoid biosynthesis. Its function is as follows. Sesquiterpene synthase converting farnesyl diphosphate to nerolidol. Also has a monoterpene synthase activity, converting geranyl diphosphate into linalool as the major product. Has no diterpene synthase activity. The sequence is that of (3S,6E)-nerolidol synthase from Selaginella moellendorffii (Spikemoss).